The sequence spans 198 residues: MNESRHARLHRATSETDITLALTLDGQGRSDVDSGIGFFDHMLTALAKHGGFDLELKAKGDLHIDGHHTVEDVGIVFGQAFRQAIGDKRGIERFGHALVPLDEALCEAVVDISGRPYLAWNVVFPREKIGTMDTELFEEFFRAFAMSAHIALHLTCKSGTNAHHIAESGFKAVARALKVAVSHDPRSAGAIPSTKGVL.

The protein belongs to the imidazoleglycerol-phosphate dehydratase family.

Its subcellular location is the cytoplasm. The enzyme catalyses D-erythro-1-(imidazol-4-yl)glycerol 3-phosphate = 3-(imidazol-4-yl)-2-oxopropyl phosphate + H2O. It functions in the pathway amino-acid biosynthesis; L-histidine biosynthesis; L-histidine from 5-phospho-alpha-D-ribose 1-diphosphate: step 6/9. The protein is Imidazoleglycerol-phosphate dehydratase of Gluconobacter oxydans (strain 621H) (Gluconobacter suboxydans).